Consider the following 620-residue polypeptide: Translation initiation factor IF-2 (620 aa).

The tr-type G domain occupies 126–295 (KRPPIVTIMG…IVTAEIMELK (170 aa)). The interval 135–142 (GHVDHGKT) is G1. 135 to 142 (GHVDHGKT) is a GTP binding site. The segment at 160–164 (NITQS) is G2. The G3 stretch occupies residues 181–184 (DTPG). GTP-binding positions include 181–185 (DTPGH) and 235–238 (NKMD). The interval 235–238 (NKMD) is G4. The interval 271-273 (SAL) is G5.

This sequence belongs to the TRAFAC class translation factor GTPase superfamily. Classic translation factor GTPase family. IF-2 subfamily.

Its subcellular location is the cytoplasm. In terms of biological role, one of the essential components for the initiation of protein synthesis. Protects formylmethionyl-tRNA from spontaneous hydrolysis and promotes its binding to the 30S ribosomal subunits. Also involved in the hydrolysis of GTP during the formation of the 70S ribosomal complex. In Malacoplasma penetrans (strain HF-2) (Mycoplasma penetrans), this protein is Translation initiation factor IF-2.